A 1803-amino-acid chain; its full sequence is Transposon Ty4-J Gag-Pol polyprotein (1803 aa).

A coiled-coil region spans residues 39-115 (RKVSIKDEQV…IQLLETNENN (77 aa)). Positions 382 to 502 (NNHLSPVQNE…KTKMVLSRKY (121 aa)) are ty4 protease. Asp-415 (for protease activity; shared with dimeric partner) is an active-site residue. The tract at residues 540-600 (AIKPTSSPGF…EPNEFWCQTC (61 aa)) is integrase-type zinc finger-like. The Integrase catalytic domain maps to 620-787 (TDHEPGSSWC…LPLKAISRQP (168 aa)). Positions 631 and 696 each coordinate Mg(2+). The disordered stretch occupies residues 1224–1250 (KRKRKRHDKNNSLTSYELERDKKRSKK). The region spanning 1376–1511 (RNMFMKTLDI…DILGMDLVYN (136 aa)) is the Reverse transcriptase Ty1/copia-type domain. Mg(2+)-binding residues include Asp-1384, Asp-1463, Asp-1464, Asp-1645, Glu-1687, and Asp-1721. In terms of domain architecture, RNase H Ty1/copia-type spans 1645–1791 (DASVGSEYDA…KRFIQVLKNK (147 aa)).

In terms of assembly, the protease is a homodimer, whose active site consists of two apposed aspartic acid residues. In terms of processing, proteolytically processed into capsid protein (CA), Ty4 protease (PR), integrase (IN) and reverse transcriptase/ribonuclease H (RT) proteins. Initially, virus-like particles (VLPs) are composed of the structural unprocessed proteins Gag and Gag-Pol, and also contain the host initiator methionine tRNA (tRNA(i)-Met) which serves as a primer for minus-strand DNA synthesis, and a dimer of genomic Ty RNA. Processing of the polyproteins occurs within the particle and proceeds by an ordered pathway, called maturation. First, the protease (PR) is released by autocatalytic cleavage of the Gag-Pol polyprotein, and this cleavage is a prerequisite for subsequent processing at the remaining sites to release the mature structural and catalytic proteins. Maturation takes place prior to the RT reaction and is required to produce transposition-competent VLPs.

The protein localises to the cytoplasm. It localises to the nucleus. It carries out the reaction DNA(n) + a 2'-deoxyribonucleoside 5'-triphosphate = DNA(n+1) + diphosphate. The catalysed reaction is Endonucleolytic cleavage to 5'-phosphomonoester.. In terms of biological role, capsid protein (CA) is the structural component of the virus-like particle (VLP), forming the shell that encapsulates the retrotransposons dimeric RNA genome. The aspartyl protease (PR) mediates the proteolytic cleavages of the Gag and Gag-Pol polyproteins after assembly of the VLP. Functionally, reverse transcriptase/ribonuclease H (RT) is a multifunctional enzyme that catalyzes the conversion of the retro-elements RNA genome into dsDNA within the VLP. The enzyme displays a DNA polymerase activity that can copy either DNA or RNA templates, and a ribonuclease H (RNase H) activity that cleaves the RNA strand of RNA-DNA heteroduplexes during plus-strand synthesis and hydrolyzes RNA primers. The conversion leads to a linear dsDNA copy of the retrotransposon that includes long terminal repeats (LTRs) at both ends. Its function is as follows. Integrase (IN) targets the VLP to the nucleus, where a subparticle preintegration complex (PIC) containing at least integrase and the newly synthesized dsDNA copy of the retrotransposon must transit the nuclear membrane. Once in the nucleus, integrase performs the integration of the dsDNA into the host genome. The chain is Transposon Ty4-J Gag-Pol polyprotein (TY4B-J) from Saccharomyces cerevisiae (strain ATCC 204508 / S288c) (Baker's yeast).